The following is a 126-amino-acid chain: Aspartate 1-decarboxylase (126 aa).

Ser25 serves as the catalytic Schiff-base intermediate with substrate; via pyruvic acid. Ser25 bears the Pyruvic acid (Ser) mark. Substrate is bound at residue Thr57. Tyr58 acts as the Proton donor in catalysis. 73 to 75 (GAA) is a binding site for substrate.

The protein belongs to the PanD family. In terms of assembly, heterooctamer of four alpha and four beta subunits. Requires pyruvate as cofactor. In terms of processing, is synthesized initially as an inactive proenzyme, which is activated by self-cleavage at a specific serine bond to produce a beta-subunit with a hydroxyl group at its C-terminus and an alpha-subunit with a pyruvoyl group at its N-terminus.

Its subcellular location is the cytoplasm. It catalyses the reaction L-aspartate + H(+) = beta-alanine + CO2. The protein operates within cofactor biosynthesis; (R)-pantothenate biosynthesis; beta-alanine from L-aspartate: step 1/1. Its function is as follows. Catalyzes the pyruvoyl-dependent decarboxylation of aspartate to produce beta-alanine. The sequence is that of Aspartate 1-decarboxylase from Salmonella choleraesuis (strain SC-B67).